The sequence spans 926 residues: Centrosomal protein of 104 kDa (926 aa).

Residues 212 to 279 (EVAQIIRRLD…DLAKEKKQQM (68 aa)) are a coiled coil. Residues 345–419 (LQEKPSASSP…RGVAGEPEPL (75 aa)) are disordered. The span at 398-409 (AEVKEADSDVRR) shows a compositional bias: basic and acidic residues. HEAT repeat units lie at residues 522 to 558 (THCV…ALFK) and 603 to 639 (GFTV…YRQH). The stretch at 678–730 (EAEVRAQKRVATKEAEKQKKEEMKALQGQSGELRETQAGVQEKESEAVKLRNQ) forms a coiled coil. Composition is skewed to basic and acidic residues over residues 690 to 701 (KEAEKQKKEEMK) and 718 to 729 (QEKESEAVKLRN). Disordered regions lie at residues 690–741 (KEAE…VLPD) and 885–926 (APQQ…YMRR). Residues 889-903 (GKGPAAAKSSTSAPK) show a composition bias toward low complexity. A compositionally biased stretch (polar residues) spans 916 to 926 (SKSSSRTYMRR).

Interacts with CCP110 and CEP97. Interacts with ARMC9, TOGARAM1, CCDC66 and CSPP1.

It is found in the cell projection. The protein localises to the cilium. It localises to the cytoplasm. Its subcellular location is the cytoskeleton. The protein resides in the microtubule organizing center. It is found in the centrosome. The protein localises to the centriole. It localises to the spindle pole. Functionally, required for ciliogenesis and for structural integrity at the ciliary tip. This chain is Centrosomal protein of 104 kDa (Cep104), found in Mus musculus (Mouse).